Reading from the N-terminus, the 168-residue chain is ATP synthase subunit b, sodium ion specific (168 aa).

Residues 9–29 (VSIDINMFWQIINFLILMFFF) traverse the membrane as a helical segment.

It belongs to the ATPase B chain family. In terms of assembly, F-type ATPases have 2 components, F(1) - the catalytic core - and F(0) - the membrane proton channel. F(1) has five subunits: alpha(3), beta(3), gamma(1), delta(1), epsilon(1). F(0) has three main subunits: a(1), b(2) and c(10-14). The alpha and beta chains form an alternating ring which encloses part of the gamma chain. F(1) is attached to F(0) by a central stalk formed by the gamma and epsilon chains, while a peripheral stalk is formed by the delta and b chains.

It is found in the cell inner membrane. Functionally, f(1)F(0) ATP synthase produces ATP from ADP in the presence of a proton or sodium gradient. F-type ATPases consist of two structural domains, F(1) containing the extramembraneous catalytic core and F(0) containing the membrane proton channel, linked together by a central stalk and a peripheral stalk. During catalysis, ATP synthesis in the catalytic domain of F(1) is coupled via a rotary mechanism of the central stalk subunits to proton translocation. Component of the F(0) channel, it forms part of the peripheral stalk, linking F(1) to F(0). This is ATP synthase subunit b, sodium ion specific (atpF) from Propionigenium modestum.